The chain runs to 462 residues: Proline--tRNA ligase (462 aa).

The protein belongs to the class-II aminoacyl-tRNA synthetase family. ProS type 3 subfamily. In terms of assembly, homodimer.

The protein localises to the cytoplasm. It carries out the reaction tRNA(Pro) + L-proline + ATP = L-prolyl-tRNA(Pro) + AMP + diphosphate. Catalyzes the attachment of proline to tRNA(Pro) in a two-step reaction: proline is first activated by ATP to form Pro-AMP and then transferred to the acceptor end of tRNA(Pro). The polypeptide is Proline--tRNA ligase (Thermoplasma acidophilum (strain ATCC 25905 / DSM 1728 / JCM 9062 / NBRC 15155 / AMRC-C165)).